We begin with the raw amino-acid sequence, 351 residues long: DNA polymerase IV (351 aa).

The region spanning 4–185 (IIHVDMDCFF…LPLGKIPGVG (182 aa)) is the UmuC domain. Mg(2+) is bound by residues aspartate 8 and aspartate 103. The active site involves glutamate 104.

It belongs to the DNA polymerase type-Y family. As to quaternary structure, monomer. Requires Mg(2+) as cofactor.

Its subcellular location is the cytoplasm. It catalyses the reaction DNA(n) + a 2'-deoxyribonucleoside 5'-triphosphate = DNA(n+1) + diphosphate. In terms of biological role, poorly processive, error-prone DNA polymerase involved in untargeted mutagenesis. Copies undamaged DNA at stalled replication forks, which arise in vivo from mismatched or misaligned primer ends. These misaligned primers can be extended by PolIV. Exhibits no 3'-5' exonuclease (proofreading) activity. May be involved in translesional synthesis, in conjunction with the beta clamp from PolIII. In Cronobacter sakazakii (strain ATCC BAA-894) (Enterobacter sakazakii), this protein is DNA polymerase IV.